The following is a 491-amino-acid chain: Synaptotagmin-9 (491 aa).

The Vesicular segment spans residues 1–52 (MPGARDALCHQALQLLAELCARGALEHDSCQDFIYHLRDRARPRLRDPDISV). The cysteine motif stretch occupies residues 9 to 31 (CHQALQLLAELCARGALEHDSCQ). The helical transmembrane segment at 53-73 (SLLTLVVTACGLALFGVSLFV) threads the bilayer. Topologically, residues 74–491 (SWKLCWVPWR…AHWHSLLEKR (418 aa)) are cytoplasmic. Polar residues predominate over residues 91–104 (SKDNNQEPLNYTDT). The segment at 91–147 (SKDNNQEPLNYTDTETNEQENSEDFLDPPTPCPDSSMKISHTSPDIPLSTQPGGQDN) is disordered. The span at 105–116 (ETNEQENSEDFL) shows a compositional bias: acidic residues. Residues 127–144 (MKISHTSPDIPLSTQPGG) are compositionally biased toward polar residues. Ser-177 bears the Phosphoserine mark. C2 domains lie at 220 to 341 (ACGK…ILWK) and 352 to 485 (DLGE…AHWH). Positions 251, 257, 309, 310, 311, 314, 317, 383, 389, 443, and 445 each coordinate Ca(2+).

Belongs to the synaptotagmin family. Homodimer; disulfide-linked via the cysteine motif. Can also form heterodimers with SYT3, SYT6, SYT7 and SYT10. Ca(2+) is required as a cofactor.

The protein localises to the cytoplasmic vesicle. It is found in the secretory vesicle. The protein resides in the synaptic vesicle membrane. Functionally, may be involved in Ca(2+)-dependent exocytosis of secretory vesicles through Ca(2+) and phospholipid binding to the C2 domain or may serve as Ca(2+) sensors in the process of vesicular trafficking and exocytosis. The protein is Synaptotagmin-9 (Syt9) of Rattus norvegicus (Rat).